A 357-amino-acid chain; its full sequence is uncharacterized protein (357 aa).

A Radical SAM core domain is found at 27–242 (HFGNTVTFER…VSSVRLNFPK (216 aa)). [4Fe-4S] cluster-binding residues include C44, C50, and C53.

[4Fe-4S] cluster serves as cofactor.

This is an uncharacterized protein from Methanocaldococcus jannaschii (strain ATCC 43067 / DSM 2661 / JAL-1 / JCM 10045 / NBRC 100440) (Methanococcus jannaschii).